The primary structure comprises 251 residues: Carbohydrate deacetylase (251 aa).

Residues H59 and H122 each contribute to the Mg(2+) site.

This sequence belongs to the YdjC deacetylase family. In terms of assembly, homodimer. The cofactor is Mg(2+).

Functionally, probably catalyzes the deacetylation of acetylated carbohydrates an important step in the degradation of oligosaccharides. The chain is Carbohydrate deacetylase from Vibrio parahaemolyticus serotype O3:K6 (strain RIMD 2210633).